Consider the following 543-residue polypeptide: Chaperonin GroEL (543 aa).

Residues 29 to 32 (TLGP), 86 to 90 (DGTTT), glycine 413, 478 to 480 (DAL), and aspartate 494 contribute to the ATP site. The disordered stretch occupies residues 524 to 543 (PEPEAPAVPAGMPGGMGGMY).

This sequence belongs to the chaperonin (HSP60) family. As to quaternary structure, forms a cylinder of 14 subunits composed of two heptameric rings stacked back-to-back. Interacts with the co-chaperonin GroES.

The protein resides in the cytoplasm. It catalyses the reaction ATP + H2O + a folded polypeptide = ADP + phosphate + an unfolded polypeptide.. Its function is as follows. Together with its co-chaperonin GroES, plays an essential role in assisting protein folding. The GroEL-GroES system forms a nano-cage that allows encapsulation of the non-native substrate proteins and provides a physical environment optimized to promote and accelerate protein folding. This Ruminiclostridium cellulolyticum (strain ATCC 35319 / DSM 5812 / JCM 6584 / H10) (Clostridium cellulolyticum) protein is Chaperonin GroEL.